The sequence spans 665 residues: Methionine--tRNA ligase (665 aa).

The 'HIGH' region motif lies at 16-26 (YYPSGKAHIGH). Positions 311 to 315 (KMSKS) match the 'KMSKS' region motif. Residue Lys-314 participates in ATP binding. The tRNA-binding domain maps to 564–665 (DFDKIDLRVA…SALPNGAKVK (102 aa)).

This sequence belongs to the class-I aminoacyl-tRNA synthetase family. MetG type 2B subfamily. Homodimer.

It is found in the cytoplasm. The catalysed reaction is tRNA(Met) + L-methionine + ATP = L-methionyl-tRNA(Met) + AMP + diphosphate. Functionally, is required not only for elongation of protein synthesis but also for the initiation of all mRNA translation through initiator tRNA(fMet) aminoacylation. The sequence is that of Methionine--tRNA ligase from Listeria monocytogenes serotype 4b (strain F2365).